The sequence spans 115 residues: Large ribosomal subunit protein uL24 (115 aa).

It belongs to the universal ribosomal protein uL24 family. Part of the 50S ribosomal subunit.

Its function is as follows. One of two assembly initiator proteins, it binds directly to the 5'-end of the 23S rRNA, where it nucleates assembly of the 50S subunit. One of the proteins that surrounds the polypeptide exit tunnel on the outside of the subunit. The chain is Large ribosomal subunit protein uL24 from Aster yellows witches'-broom phytoplasma (strain AYWB).